The chain runs to 201 residues: Small ribosomal subunit protein uS4c (201 aa).

Residues 15–44 (LGALPGLTSKRPKTGNDLKNQSRSGKKSQY) form a disordered region. In terms of domain architecture, S4 RNA-binding spans 89–150 (MRLDNILFRL…EKKSRTLIQN (62 aa)).

The protein belongs to the universal ribosomal protein uS4 family. Part of the 30S ribosomal subunit. Contacts protein S5. The interaction surface between S4 and S5 is involved in control of translational fidelity.

It is found in the plastid. The protein localises to the chloroplast. In terms of biological role, one of the primary rRNA binding proteins, it binds directly to 16S rRNA where it nucleates assembly of the body of the 30S subunit. Functionally, with S5 and S12 plays an important role in translational accuracy. The chain is Small ribosomal subunit protein uS4c (rps4) from Cucumis sativus (Cucumber).